A 35-amino-acid polypeptide reads, in one-letter code: Probable L,D-transpeptidase ErfK/SrfK (35 aa).

Residues Met-1 to Ala-21 form the signal peptide.

The protein belongs to the YkuD family.

It is found in the periplasm. It functions in the pathway cell wall biogenesis; peptidoglycan biosynthesis. In Klebsiella aerogenes (Enterobacter aerogenes), this protein is Probable L,D-transpeptidase ErfK/SrfK (erfK).